The following is a 143-amino-acid chain: uncharacterized protein (143 aa).

Residues 1–37 (MSAPASSSAIAPSQPTAPGHARHSASWSASASDPSGA) are disordered.

Belongs to the dynein light chain Tctex-type family.

This is an uncharacterized protein from Mycosarcoma maydis (Corn smut fungus).